The primary structure comprises 736 residues: Na(+)/H(+) antiporter NhaA (736 aa).

A na(+)/H(+) antiporter NhaA region spans residues 1 to 387 (MNHSPQSARP…ICGYLLLRAA (387 aa)). 11 helical membrane-spanning segments follow: residues 23–43 (AGGI…NSPF), 58–78 (LSLA…LVGL), 96–116 (MLPG…FAVL), 126–146 (GWAV…SLLG), 155–175 (VFLA…IAIF), 178–198 (AEIS…LFVM), 201–221 (MDVV…FFVF), 265–285 (VAFI…FKGL), 298–318 (ILLG…WLAI), 334–354 (LYGV…IGLL), and 367–387 (IGVL…LRAA). The peptidase S49 stretch occupies residues 388–736 (RPDQSAANPL…EKAIWARYGL (349 aa)).

In the N-terminal section; belongs to the NhaA Na(+)/H(+) (TC 2.A.33) antiporter family. It in the C-terminal section; belongs to the peptidase S49 family.

Its subcellular location is the cell inner membrane. The catalysed reaction is Na(+)(in) + 2 H(+)(out) = Na(+)(out) + 2 H(+)(in). Na(+)/H(+) antiporter that extrudes sodium in exchange for external protons. The chain is Na(+)/H(+) antiporter NhaA from Brucella melitensis biotype 1 (strain ATCC 23456 / CCUG 17765 / NCTC 10094 / 16M).